We begin with the raw amino-acid sequence, 197 residues long: Viral polyamine acetyltransferase (197 aa).

Asparagine 22 serves as a coordination point for acetyl-CoA. The active site involves glutamate 27. The 81-residue stretch at 102–182 folds into the N-acetyltransferase domain; sequence SYTPDDKCLY…YQYGITKPFD (81 aa). Residues isoleucine 115, serine 117, glycine 121, glycine 123, alanine 125, threonine 126, threonine 149, asparagine 150, and lysine 159 each coordinate acetyl-CoA.

Belongs to the acetyltransferase family.

It carries out the reaction spermine + acetyl-CoA = N(1)-acetylspermine + CoA + H(+). It catalyses the reaction spermidine + acetyl-CoA = N(1)-acetylspermidine + CoA + H(+). The catalysed reaction is spermidine + acetyl-CoA = N(8)-acetylspermidine + CoA + H(+). The enzyme catalyses putrescine + acetyl-CoA = N-acetylputrescine + CoA + H(+). It carries out the reaction cadaverine + acetyl-CoA = N-acetylcadaverine + CoA + H(+). It catalyses the reaction sym-homospermidine + acetyl-CoA = N(1)-acetyl-sym-homospermidine + CoA + H(+). In terms of biological role, acetylates polyamines such as spermine, spermidine, cadaverine, homospermidine and putrescine (the latter with low efficiency). May play a role in the regulation of polyamine catabolism in the host during viral replication. The sequence is that of Viral polyamine acetyltransferase from Chlorella (PBCV-1).